A 227-amino-acid polypeptide reads, in one-letter code: 2,3-bisphosphoglycerate-dependent phosphoglycerate mutase (227 aa).

Substrate-binding positions include 7-14 (RHGQSEWN), 20-21 (TG), arginine 59, 86-89 (ERHY), lysine 97, 113-114 (RR), and 182-183 (GN). Histidine 8 functions as the Tele-phosphohistidine intermediate in the catalytic mechanism. Catalysis depends on glutamate 86, which acts as the Proton donor/acceptor.

The protein belongs to the phosphoglycerate mutase family. BPG-dependent PGAM subfamily. As to quaternary structure, homodimer.

It carries out the reaction (2R)-2-phosphoglycerate = (2R)-3-phosphoglycerate. Its pathway is carbohydrate degradation; glycolysis; pyruvate from D-glyceraldehyde 3-phosphate: step 3/5. Catalyzes the interconversion of 2-phosphoglycerate and 3-phosphoglycerate. The polypeptide is 2,3-bisphosphoglycerate-dependent phosphoglycerate mutase (Neisseria meningitidis serogroup B (strain ATCC BAA-335 / MC58)).